A 339-amino-acid polypeptide reads, in one-letter code: Tetraacyldisaccharide 4'-kinase (339 aa).

61 to 68 (TAGGTGKT) lines the ATP pocket.

It belongs to the LpxK family.

The enzyme catalyses a lipid A disaccharide + ATP = a lipid IVA + ADP + H(+). The protein operates within glycolipid biosynthesis; lipid IV(A) biosynthesis; lipid IV(A) from (3R)-3-hydroxytetradecanoyl-[acyl-carrier-protein] and UDP-N-acetyl-alpha-D-glucosamine: step 6/6. Transfers the gamma-phosphate of ATP to the 4'-position of a tetraacyldisaccharide 1-phosphate intermediate (termed DS-1-P) to form tetraacyldisaccharide 1,4'-bis-phosphate (lipid IVA). This Stenotrophomonas maltophilia (strain R551-3) protein is Tetraacyldisaccharide 4'-kinase.